The primary structure comprises 340 residues: DNA-directed RNA polymerase subunit alpha (340 aa).

Residues 1-233 (MYRNWRDLIS…EQLSIFINFD (233 aa)) form an alpha N-terminal domain (alpha-NTD) region. Positions 251–340 (INENLYRSVD…RLRGERKDEE (90 aa)) are alpha C-terminal domain (alpha-CTD).

This sequence belongs to the RNA polymerase alpha chain family. As to quaternary structure, homodimer. The RNAP catalytic core consists of 2 alpha, 1 beta, 1 beta' and 1 omega subunit. When a sigma factor is associated with the core the holoenzyme is formed, which can initiate transcription.

It carries out the reaction RNA(n) + a ribonucleoside 5'-triphosphate = RNA(n+1) + diphosphate. Its function is as follows. DNA-dependent RNA polymerase catalyzes the transcription of DNA into RNA using the four ribonucleoside triphosphates as substrates. In Geobacter sulfurreducens (strain ATCC 51573 / DSM 12127 / PCA), this protein is DNA-directed RNA polymerase subunit alpha.